The primary structure comprises 202 residues: Transcriptional regulator SdrP (202 aa).

Residues 117–189 (QRLKNRMAAA…YGKIQLLDLK (73 aa)) enclose the HTH crp-type domain. Residues 149–168 (HDELAAAVGSVRETVTKVIG) constitute a DNA-binding region (H-T-H motif).

In terms of assembly, homodimer.

Functionally, activates transcription. The consensus DNA-binding site of this transcriptional regulator is 5'-WWGTGAN(5-7)ACACWW-3' in which W is A or T and N is G, A, T or C. Regulated genes include those encoding proteins involved in nutrient and energy supply, redox control and polyadenylation of mRNA. Also regulates genes involved in oxidative stress response such as genes encoding manganese superoxide dismutase and catalase, and genes encoding a protein involved in nucleotide excision repair of damaged DNA and putative proteins involved in redox control, protein degradation and transcriptional regulation. The protein is Transcriptional regulator SdrP of Thermus thermophilus (strain ATCC 27634 / DSM 579 / HB8).